The primary structure comprises 373 residues: tRNA (guanine(26)-N(2))-dimethyltransferase (373 aa).

Residues Lys-2 to Ile-365 form the Trm1 methyltransferase domain. S-adenosyl-L-methionine contacts are provided by Arg-35, Arg-66, Asp-86, Asp-113, and Ala-114.

It belongs to the class I-like SAM-binding methyltransferase superfamily. Trm1 family.

It catalyses the reaction guanosine(26) in tRNA + 2 S-adenosyl-L-methionine = N(2)-dimethylguanosine(26) in tRNA + 2 S-adenosyl-L-homocysteine + 2 H(+). Functionally, dimethylates a single guanine residue at position 26 of a number of tRNAs using S-adenosyl-L-methionine as donor of the methyl groups. This chain is tRNA (guanine(26)-N(2))-dimethyltransferase, found in Methanococcus maripaludis (Methanococcus deltae).